The following is a 968-amino-acid chain: Protein translocase subunit SecA 1 (968 aa).

ATP contacts are provided by residues Gln86, 104 to 108 (GEGKT), and Asp493. Composition is skewed to basic and acidic residues over residues 858–868 (EAEKTEDKAED) and 883–898 (ESAK…ESVA). The segment at 858-968 (EAEKTEDKAE…KCHGAPKSRV (111 aa)) is disordered. Zn(2+)-binding residues include Cys949, Cys951, Cys960, and His961. Residues 955-968 (KKYKKCHGAPKSRV) are compositionally biased toward basic residues.

This sequence belongs to the SecA family. As to quaternary structure, monomer and homodimer. Part of the essential Sec protein translocation apparatus which comprises SecA, SecYEG and auxiliary proteins SecDF. Other proteins may also be involved. The cofactor is Zn(2+).

The protein localises to the cell membrane. Its subcellular location is the cytoplasm. The enzyme catalyses ATP + H2O + cellular proteinSide 1 = ADP + phosphate + cellular proteinSide 2.. Its function is as follows. Part of the Sec protein translocase complex. Interacts with the SecYEG preprotein conducting channel. Has a central role in coupling the hydrolysis of ATP to the transfer of proteins into and across the cell membrane, serving as an ATP-driven molecular motor driving the stepwise translocation of polypeptide chains across the membrane. This is Protein translocase subunit SecA 1 from Thermobifida fusca (strain YX).